The sequence spans 306 residues: Shugoshin (306 aa).

Residues 28 to 75 (NFKSTNESLIKKNLQLKQQLSQCTKALEKLRNENIALREQNQELIDAT) are a coiled coil. Disordered regions lie at residues 122-196 (PEPS…GRRS) and 223-306 (IAPS…DTFF). Residues 133-161 (PKMECNLEKLDESPVRNFPRSDYEEENKS) show a composition bias toward basic and acidic residues. Polar residues predominate over residues 167–181 (NGPSSSSSMTQNLEN). Residues 230–241 (GGPPKKAPPRKA) show a composition bias toward pro residues.

This sequence belongs to the shugoshin family.

It is found in the nucleus. It localises to the chromosome. Its subcellular location is the centromere. Functionally, plays a central role in chromosome cohesion during cell division by preventing premature dissociation of cohesin complex from centromeres after prophase, when most of cohesin complex dissociates from chromosomes arms. The polypeptide is Shugoshin (sgo-1) (Caenorhabditis briggsae).